The following is a 543-amino-acid chain: Chaperonin GroEL (543 aa).

ATP-binding positions include 29-32, lysine 50, 86-90, glycine 415, and aspartate 495; these read TLGP and DGTTT.

This sequence belongs to the chaperonin (HSP60) family. Forms a cylinder of 14 subunits composed of two heptameric rings stacked back-to-back. Interacts with the co-chaperonin GroES.

The protein localises to the cytoplasm. It catalyses the reaction ATP + H2O + a folded polypeptide = ADP + phosphate + an unfolded polypeptide.. Functionally, together with its co-chaperonin GroES, plays an essential role in assisting protein folding. The GroEL-GroES system forms a nano-cage that allows encapsulation of the non-native substrate proteins and provides a physical environment optimized to promote and accelerate protein folding. The polypeptide is Chaperonin GroEL (Flavobacterium johnsoniae (strain ATCC 17061 / DSM 2064 / JCM 8514 / BCRC 14874 / CCUG 350202 / NBRC 14942 / NCIMB 11054 / UW101) (Cytophaga johnsonae)).